The sequence spans 606 residues: Aspartate--tRNA(Asp/Asn) ligase (606 aa).

L-aspartate is bound at residue Glu-177. An aspartate region spans residues 201 to 204 (QLFK). Residue Arg-223 coordinates L-aspartate. Residues 223–225 (RDE) and Gln-232 contribute to the ATP site. Residue His-461 participates in L-aspartate binding. An ATP-binding site is contributed by Glu-499. Arg-506 lines the L-aspartate pocket. 551–554 (GLDR) provides a ligand contact to ATP.

The protein belongs to the class-II aminoacyl-tRNA synthetase family. Type 1 subfamily. Homodimer.

It is found in the cytoplasm. The enzyme catalyses tRNA(Asx) + L-aspartate + ATP = L-aspartyl-tRNA(Asx) + AMP + diphosphate. Aspartyl-tRNA synthetase with relaxed tRNA specificity since it is able to aspartylate not only its cognate tRNA(Asp) but also tRNA(Asn). Reaction proceeds in two steps: L-aspartate is first activated by ATP to form Asp-AMP and then transferred to the acceptor end of tRNA(Asp/Asn). The sequence is that of Aspartate--tRNA(Asp/Asn) ligase from Prochlorococcus marinus (strain NATL2A).